We begin with the raw amino-acid sequence, 376 residues long: MVKNYDSVEFPYCDEVSKYERLAKIGQGTFGEVFKAKHRQTGKKVALKKVLMENEKEGFPITALREIKILQLLKHENVVHLIEICRNKISPTANQYNRCKGTIFLVFDFCEHDLAGLLSNAHVKFTVAEIKKVMQMLLNGLYYIHRNKILHRDMKAANVLITRDGVLKLADFGLARAFSLAKNSQPNKYTNRVVTLWYRPPELLLGERDYGPPIDLWGAGCIMAEMWTRSPIMQGNTEQHQLTLISQLCGSITPEVWPNVDKYELYQKLELPKGQKRKVKERLKAYVKDVCALDLIDKLLILDPAQRTDSDEALNHDFFWSDPMPSDLKNMLSTHNQSMFEYLAPPRRRGGHMPQQPANQARNPAATNQSEFDRVF.

Positions 19-319 constitute a Protein kinase domain; it reads YERLAKIGQG…SDEALNHDFF (301 aa). Residues 25–33 and lysine 48 each bind ATP; that span reads IGQGTFGEV. Aspartate 153 acts as the Proton acceptor in catalysis. A disordered region spans residues 345 to 376; the sequence is PPRRRGGHMPQQPANQARNPAATNQSEFDRVF. Residues 354-369 show a composition bias toward low complexity; that stretch reads PQQPANQARNPAATNQ.

It belongs to the protein kinase superfamily. CMGC Ser/Thr protein kinase family. CDC2/CDKX subfamily. As to quaternary structure, associates with cyclin-T to form P-TEFb.

It localises to the nucleus. The catalysed reaction is L-seryl-[protein] + ATP = O-phospho-L-seryl-[protein] + ADP + H(+). It catalyses the reaction L-threonyl-[protein] + ATP = O-phospho-L-threonyl-[protein] + ADP + H(+). The enzyme catalyses [DNA-directed RNA polymerase] + ATP = phospho-[DNA-directed RNA polymerase] + ADP + H(+). Functionally, member of the cyclin-dependent kinase pair (CDK9/cyclin-T) complex, also called positive transcription elongation factor B (P-TEFb), which is proposed to facilitate the transition from abortive to production elongation by phosphorylating the CTD (C-terminal domain) of the large subunit of RNA polymerase II (RNAP II) and SUPT5H. The sequence is that of Cyclin-dependent kinase 9-B (cdk9-b) from Xenopus laevis (African clawed frog).